Here is a 778-residue protein sequence, read N- to C-terminus: MATLPVLPLTDAVLLPGMAIPVTLDPTTQAAVDAARATGDQRLLAVPRLDGEYGPVGVVATIEKVGRLPSGEPAAVVRGLARARIGSGVPGPGAALWVEAAELAEPAPAGRARELAREYRALMTSVLQQRGAWQVIDAIERMTDLSELADSAGYVSWLSLAQKTELLAAPDVTTRLELLVGWVRAHLAEQEVAEQINTDVREGLEKSQREFLLRQQLATIRKELGEDEPEGSADYRARVEAADLPAPVRDAALREVGKLERASDASPEAGWIRTWLDTVLEMPWNTRTEDNTDLVAARAVLDADHAGLTDVKDRILEYLAVRNRRVERNLGVVGGRGSGAVLALAGPPGVGKTSLGESVARALGRRFVRVSLGGVRDEAEIRGHRRTYVGALPGRIVRALREAGSMNPVVLLDEVDKLAVGYSGDPAAALLEVLDPAQNHTFRDHYLEVDLDLSDVLFLATANVVEAIPSPLLDRMELVTLDGYTEDEKVAIARDHLLPRQRERAGLTADEVTISDGVLARIAGEYTREAGVRQLERSLAKIFRKVAVTATTDPAPVHVDTGNLHRYLGRPKFSPESAERTAVPGVATGLAVTGAGGDVLFVEATSMAGEPGLTLTGQLGDVMKESAQIALSYLRSNGRRLGLDPNALAGRRIHLHVPAGAVPKDGPSAGITMVTALASLVSGRPVRPEFGMTGEVTLSGRALPIGGVKQKLLAAHRAGLTEVIIPQRNEPDLDDLPAEVREALTVHTLADVADVLALALRPADLDADSLDGEALATA.

A Lon N-terminal domain is found at 4-187 (LPVLPLTDAV…LLVGWVRAHL (184 aa)). 346 to 353 (GPPGVGKT) is a binding site for ATP. Residues 581 to 762 (TAVPGVATGL…ADVLALALRP (182 aa)) enclose the Lon proteolytic domain. Residues serine 668 and lysine 711 contribute to the active site.

Belongs to the peptidase S16 family. Homohexamer. Organized in a ring with a central cavity.

The protein localises to the cytoplasm. The catalysed reaction is Hydrolysis of proteins in presence of ATP.. In terms of biological role, ATP-dependent serine protease that mediates the selective degradation of mutant and abnormal proteins as well as certain short-lived regulatory proteins. Required for cellular homeostasis and for survival from DNA damage and developmental changes induced by stress. Degrades polypeptides processively to yield small peptide fragments that are 5 to 10 amino acids long. Binds to DNA in a double-stranded, site-specific manner. This chain is Lon protease, found in Salinispora arenicola (strain CNS-205).